The primary structure comprises 143 residues: Large ribosomal subunit protein uL13 (143 aa).

It belongs to the universal ribosomal protein uL13 family. As to quaternary structure, part of the 50S ribosomal subunit.

In terms of biological role, this protein is one of the early assembly proteins of the 50S ribosomal subunit, although it is not seen to bind rRNA by itself. It is important during the early stages of 50S assembly. This is Large ribosomal subunit protein uL13 from Caldanaerobacter subterraneus subsp. tengcongensis (strain DSM 15242 / JCM 11007 / NBRC 100824 / MB4) (Thermoanaerobacter tengcongensis).